Reading from the N-terminus, the 1079-residue chain is MYGISSFYCRDPPNLTCLTWIGIDLAVAASQTDRCLYEIIVPPSLGQVRVSRISDPIPSTIISMTALPPGNGSSASSSTSGPAVMANTASSYQITKGSGSSSTSASQATIVAGCANGTLIFIQADVLGLGCTSQRVSVRRQKSISVSSYVGGEDAIHPVTSLCMMQPRGSSLLVGLETGTVLLLTMMGGLYQFRQILKSNLNAPVHAINSIDRNRAAIAYGGSVTVINITKNNSTELSYKLQSDGDAITALANTGRVLVLGCEHRGAIVLDLLSGLEISVIPPPPYDAVVSVSSQPVASNGFIIATRRGVVIGCRENGTVRSCATLEYDSAHLPVSKIAADGAPATLLSPLADSSMTNVDENLGSSVGGIRDLAFAPYGGSFLCLCLNGLAVGYLAPQRLSSGYITIEVTGLTTVMITDARLQVSEVYTAPEPVISLFLSRFAHTLRLGATTASSVIVWTPPTMAKISSFSLEGGMPLVTKIQWITEPVRSTSYGDMIRPSTVQNQPSTQGLPNRQQQELDFDNLLEKPGDTLQQTESRPLLKSFSQKKLEHDKASNPPIKTAAYVRNPPRYIVLGDSYHLVVDISGEANIVSATTLALVTSIYISSLDSDRQIAIIDSALAYVEGGTTLRIIDPRSGNFILRGVIHHKAVLDLTIGISSQQHIRNASETSAKEGTQGNAVSDFALGSVFSNLTGHQAGKPVDATASTSSLKQTEMSSNDASSYVLALLDTSNSLYVGRLTTSPQAYAKLGNSMSTAILQQSKFLDSIPYSIQFIAQTDLLCMLISESQSLPQALSQIGETVGSDCKLRLVVDACPVRTSIITEDPVFVTPTTIDYSSVQRSNAAVSIFEEDPSRILAAYRMLSRSNIHTIHRITPMVLKNDGLMSNAITMSHAVLGLAGDSSQMVVAVPEFSVLLNYLAKSGNTQRALRLCRFLDQKPLWAQMATYCIEANNIQHLQSALSGLGMVAKASYCHSISSHNEVNAGAVKLAIGDPEGANILSSQGKIGAAILAACDLWNFSKALELCRGNKKYMPLLVYLRTKYHNNLGMSNCNNEEPWLSLSRQYGNVSEDEIHRLMKG.

The disordered stretch occupies residues 495–514 (GDMIRPSTVQNQPSTQGLPN). Residues 501-514 (STVQNQPSTQGLPN) are compositionally biased toward polar residues.

The protein resides in the cell projection. It is found in the cilium. Its subcellular location is the flagellum. The protein localises to the cytoplasm. It localises to the cytoskeleton. The protein resides in the flagellum axoneme. It is found in the flagellum basal body. In terms of biological role, component of the intraflagellar transport complex B (IFT-B) involved in flagellar assembly. The chain is Intraflagellar transport protein 80 from Giardia intestinalis (strain ATCC 50803 / WB clone C6) (Giardia lamblia).